The following is a 2763-amino-acid chain: Large tegument protein deneddylase (2763 aa).

Residues 1–247 are deubiquitination activity; that stretch reads MDIIPPIAVT…CDTYFTDEQY (247 aa). The Peptidase C76 domain occupies 12–237; that stretch reads AGVGSRNQFD…SSAVTLIYGS (226 aa). Active-site residues include Cys-32, Asp-168, and His-170. Positions 495 to 523 are interaction with inner tegument protein; sequence LELFINLTILRLTGFVVENGTRTHHGATS. Residues 2456–2476 are disordered; that stretch reads VRPAQPAQPAQPAQPAQTVQP. Repeat copies occupy residues 2458 to 2460, 2461 to 2463, 2464 to 2466, 2467 to 2469, and 2470 to 2472. Positions 2458–2472 are 5 X 3 AA repeats of P-A-Q; sequence PAQPAQPAQPAQPAQ. Residues 2459 to 2476 show a composition bias toward low complexity; sequence AQPAQPAQPAQPAQTVQP.

The protein belongs to the herpesviridae large tegument protein family. As to quaternary structure, interacts with host CUL1 and CUL4A; these interactions inhibit the E3 ligase activity of cullins. Interacts with inner tegument protein. Interacts with capsid vertex specific component CVC2. Interacts with the major capsid protein/MCP.

It localises to the virion tegument. Its subcellular location is the host cytoplasm. The protein localises to the host nucleus. It catalyses the reaction Thiol-dependent hydrolysis of ester, thioester, amide, peptide and isopeptide bonds formed by the C-terminal Gly of ubiquitin (a 76-residue protein attached to proteins as an intracellular targeting signal).. Functionally, large tegument protein that plays multiple roles in the viral cycle. During viral entry, remains associated with the capsid while most of the tegument is detached and participates in the capsid transport toward the host nucleus. Plays a role in the routing of the capsid at the nuclear pore complex and subsequent uncoating. Within the host nucleus, acts as a deneddylase and promotes the degradation of nuclear CRLs (cullin-RING ubiquitin ligases) and thereby stabilizes nuclear CRL substrates, while cytoplasmic CRLs remain unaffected. These modifications prevent host cell cycle S-phase progression and create a favorable environment allowing efficient viral genome replication. Participates later in the secondary envelopment of capsids. Indeed, plays a linker role for the association of the outer viral tegument to the capsids together with the inner tegument protein. This is Large tegument protein deneddylase from Homo sapiens (Human).